Reading from the N-terminus, the 755-residue chain is Beta-galactosidase (755 aa).

The Proton donor role is filled by E382. E463 acts as the Nucleophile in catalysis.

Belongs to the glycosyl hydrolase 2 family.

The enzyme catalyses Hydrolysis of terminal non-reducing beta-D-galactose residues in beta-D-galactosides.. The chain is Beta-galactosidase (lacZ) from Rhizobium meliloti (Ensifer meliloti).